A 371-amino-acid polypeptide reads, in one-letter code: Alanine racemase (371 aa).

The active-site Proton acceptor; specific for D-alanine is the lysine 39. Lysine 39 carries the post-translational modification N6-(pyridoxal phosphate)lysine. Arginine 137 is a binding site for substrate. Tyrosine 266 (proton acceptor; specific for L-alanine) is an active-site residue. Methionine 314 provides a ligand contact to substrate.

This sequence belongs to the alanine racemase family. Requires pyridoxal 5'-phosphate as cofactor.

It carries out the reaction L-alanine = D-alanine. Its pathway is amino-acid biosynthesis; D-alanine biosynthesis; D-alanine from L-alanine: step 1/1. Its function is as follows. Catalyzes the interconversion of L-alanine and D-alanine. May also act on other amino acids. The chain is Alanine racemase (alr) from Desulfovibrio desulfuricans (strain ATCC 27774 / DSM 6949 / MB).